We begin with the raw amino-acid sequence, 438 residues long: 2-(3-amino-3-carboxypropyl)histidine synthase subunit 1 (438 aa).

A disordered region spans residues 1-24 (MAALVVSETAEPGSRVGPGRGRIS). Positions 110, 214, and 342 each coordinate [4Fe-4S] cluster. The segment at 402–438 (LCQPASDKVQQGSRGGSPAPACESCNCADQKATSPAP) is disordered. Ser418 bears the Phosphoserine mark.

Belongs to the DPH1/DPH2 family. DPH1 subfamily. Component of the 2-(3-amino-3-carboxypropyl)histidine synthase complex composed of DPH1, DPH2, DPH3 and a NADH-dependent reductase. Interacts with DPH2. Interacts with RBM8A. [4Fe-4S] cluster is required as a cofactor. As to expression, strongly expressed in kidney and liver. Moderately expressed in brain, skin and testis. Weakly expressed in heart, lung, small intestine, spleen, stomach and thymus.

The protein localises to the nucleus. Its subcellular location is the cytoplasm. The catalysed reaction is L-histidyl-[translation elongation factor 2] + S-adenosyl-L-methionine = 2-[(3S)-amino-3-carboxypropyl]-L-histidyl-[translation elongation factor 2] + S-methyl-5'-thioadenosine + H(+). The protein operates within protein modification; peptidyl-diphthamide biosynthesis. In terms of biological role, catalyzes the first step of diphthamide biosynthesis, a post-translational modification of histidine which occurs in elongation factor 2. DPH1 and DPH2 transfer a 3-amino-3-carboxypropyl (ACP) group from S-adenosyl-L-methionine (SAM) to a histidine residue, the reaction is assisted by a reduction system comprising DPH3 and a NADH-dependent reductase. Acts as a tumor suppressor. In Mus musculus (Mouse), this protein is 2-(3-amino-3-carboxypropyl)histidine synthase subunit 1.